The chain runs to 159 residues: RNA pyrophosphohydrolase (159 aa).

One can recognise a Nudix hydrolase domain in the interval G6–K149. A Nudix box motif is present at residues G38–G59.

Belongs to the Nudix hydrolase family. RppH subfamily. Requires a divalent metal cation as cofactor.

Its function is as follows. Accelerates the degradation of transcripts by removing pyrophosphate from the 5'-end of triphosphorylated RNA, leading to a more labile monophosphorylated state that can stimulate subsequent ribonuclease cleavage. The sequence is that of RNA pyrophosphohydrolase from Pseudomonas aeruginosa (strain LESB58).